A 330-amino-acid polypeptide reads, in one-letter code: Solute-binding protein NAS141_03721 (330 aa).

The first 27 residues, 1 to 27 (MSFFTKTAQLVSGAAVAATLFTATAQA), serve as a signal peptide directing secretion. Alpha-D-mannuronate contacts are provided by residues Glu75, Asn97, Arg153, Arg173, Tyr196, 213–214 (NE), and Arg240. Alpha-D-taluronate contacts are provided by residues Glu75, Asn97, Arg153, Arg173, Tyr196, 213 to 214 (NE), and Arg240.

This sequence belongs to the bacterial solute-binding protein 7 family. The complex is comprised of an extracytoplasmic solute-binding protein and a heteromeric permease formed by two transmembrane proteins.

The protein localises to the periplasm. Its function is as follows. Solute-binding protein that binds D-mannuronate and D-taluronate (in vitro). Probably part of a tripartite ATP-independent periplasmic (TRAP) transport system that mediates solute transport into the cytoplasm. The polypeptide is Solute-binding protein NAS141_03721 (Sulfitobacter sp. (strain NAS-14.1)).